The chain runs to 133 residues: Lanmodulin (133 aa).

The N-terminal stretch at 1 to 21 (MAFRLSSAVLLAALVAAPAYA) is a signal peptide. Asp-35, Asp-37, Asp-39, Thr-41, Glu-46, Asp-59, Asp-61, Asp-63, Thr-65, Glu-70, Asp-84, Asp-86, Asp-88, Thr-90, Glu-95, Asn-108, Asp-110, Asp-112, Thr-114, and Glu-119 together coordinate Nd(3+). 4 EF-hand domains span residues 35-46 (DPDKDGTIDLKE), 59-70 (DPDKDGTLDAKE), 84-95 (DPDNDGTLDKKE), and 108-119 (NPDNDGTIDARE).

As to quaternary structure, monomer.

The protein resides in the periplasm. In terms of biological role, high-affinity lanthanide (Ln)-binding protein. Shows 100 million-fold selectivity for La(3+) over Ca(2+). Binds 3 equiv of Ln(3+) with picomolar affinity and a fourth with approximately micromolar affinity. May be involved in receiving and then transporting lanthanides (such as La(3+), Nd(3+) and Sm(3+)) to a specific periplasmic destination. This chain is Lanmodulin, found in Methylorubrum extorquens (strain ATCC 14718 / DSM 1338 / JCM 2805 / NCIMB 9133 / AM1) (Methylobacterium extorquens).